The sequence spans 861 residues: DNA mismatch repair protein MutS (861 aa).

Gly-609–Ser-616 serves as a coordination point for ATP.

This sequence belongs to the DNA mismatch repair MutS family.

Functionally, this protein is involved in the repair of mismatches in DNA. It is possible that it carries out the mismatch recognition step. This protein has a weak ATPase activity. This Borrelia hermsii (strain HS1 / DAH) protein is DNA mismatch repair protein MutS.